We begin with the raw amino-acid sequence, 71 residues long: Cold shock-like protein CspB (71 aa).

The 61-residue stretch at 7 to 67 (GLVKWFNADK…GAKGPAAANV (61 aa)) folds into the CSD domain.

It is found in the cytoplasm. This is Cold shock-like protein CspB (cspB) from Escherichia coli (strain K12).